A 130-amino-acid polypeptide reads, in one-letter code: Small ribosomal subunit protein uS8 (130 aa).

It belongs to the universal ribosomal protein uS8 family.

This chain is Small ribosomal subunit protein uS8 (RPS15A), found in Paracentrotus lividus (Common sea urchin).